The primary structure comprises 238 residues: Ribonuclease PH (238 aa).

Phosphate contacts are provided by residues arginine 86 and 124–126; that span reads GTR.

This sequence belongs to the RNase PH family. As to quaternary structure, homohexameric ring arranged as a trimer of dimers.

It carries out the reaction tRNA(n+1) + phosphate = tRNA(n) + a ribonucleoside 5'-diphosphate. Functionally, phosphorolytic 3'-5' exoribonuclease that plays an important role in tRNA 3'-end maturation. Removes nucleotide residues following the 3'-CCA terminus of tRNAs; can also add nucleotides to the ends of RNA molecules by using nucleoside diphosphates as substrates, but this may not be physiologically important. Probably plays a role in initiation of 16S rRNA degradation (leading to ribosome degradation) during starvation. In Vibrio cholerae serotype O1 (strain ATCC 39315 / El Tor Inaba N16961), this protein is Ribonuclease PH.